The primary structure comprises 867 residues: Ataxin-7 (867 aa).

Basic and acidic residues predominate over residues 1-15 (MSERAADDVRGEPRR). The segment at 1–59 (MSERAADDVRGEPRRAAGGAAAARQQQQQPQPLQPQRQHPPLRRPRAEDGGTGDTTTSA) is disordered. Residues 16–39 (AAGGAAAARQQQQQPQPLQPQRQH) show a composition bias toward low complexity. Lysine 222 is modified (N6-acetyllysine). Lysine 243 participates in a covalent cross-link: Glycyl lysine isopeptide (Lys-Gly) (interchain with G-Cter in SUMO); alternate. Lysine 243 participates in a covalent cross-link: Glycyl lysine isopeptide (Lys-Gly) (interchain with G-Cter in SUMO2); alternate. In terms of domain architecture, SCA7 spans 320–387 (KRLSEREFDP…KAREKELIRH (68 aa)). A compositionally biased stretch (basic and acidic residues) spans 379-400 (AREKELIRHDSQQVPHPLRDPH). Disordered stretches follow at residues 379 to 483 (AREK…EESV), 600 to 711 (HGTT…SHSV), and 845 to 867 (TGNI…KARP). Pro residues-rich tracts occupy residues 426 to 437 (PQTPSLPRPPGC) and 447 to 462 (IDPP…PLPA). Acidic residues predominate over residues 472 to 481 (EEGEGDDREE). A compositionally biased stretch (low complexity) spans 619 to 647 (SVQSRQVSASSSPPSTPSGLSSVPSSPLS). Residues 649–659 (KPQKWKPSKSI) show a composition bias toward basic residues. Residues 665 to 674 (SALSTNCHNA) show a composition bias toward polar residues. Over residues 689 to 711 (SSPLLVPSSSSSSSSSSSSSHSV) the composition is skewed to low complexity. The span at 846–860 (GNISGAQGLTNNSLL) shows a compositional bias: polar residues.

Belongs to the ataxin-7 family. As to quaternary structure, component of the SAGA transcription coactivator-HAT complex, at least composed of SUPT3H, GCN5L2, TAF5L, TAF6L, SUPT7L, TADA3L, TAD1L, TAF10, TAF12, TRRAP, TAF9 and ATXN7. The STAGA core complex is associated with a subcomplex required for histone deubiquitination composed of ATXN7L3, ENY2 and USP22. Interacts with SORBS1, PSMC1 and CRX. Interacts with TRRAP, GCN5L2 and TAF10. Interacts with alpha tubulin. Post-translationally, proteolytically cleaved by caspase-7 (CASP7). Sumoylation has no effect on subcellular location or interaction with components of the STAGA complex. In terms of tissue distribution, widely expressed in adult tissues, with the highest expression in heart, brain, liver and kidney.

The protein localises to the nucleus. It localises to the nucleolus. Its subcellular location is the nucleus matrix. The protein resides in the cytoplasm. It is found in the cytoskeleton. Functionally, acts as a component of the SAGA (aka STAGA) transcription coactivator-HAT complex. Mediates the interaction of SAGA complex with the CRX and is involved in CRX-dependent gene activation. Probably involved in tethering the deubiquitination module within the SAGA complex. Necessary for microtubule cytoskeleton stabilization. Involved in neurodegeneration. The chain is Ataxin-7 (Atxn7) from Mus musculus (Mouse).